Here is a 436-residue protein sequence, read N- to C-terminus: Testican-3 (436 aa).

The signal sequence occupies residues 1 to 22 (MLKVSAVLCVCAAAWCSQSLAA). Disulfide bonds link C90/C101, C95/C111, C139/C169, C142/C162, C151/C183, C317/C341, C352/C359, and C361/C380. Positions 133-185 (GPILSTCKQCPVVYPSPVCGSDGHTYSFQCKLEYQACVLGKQISVKCEGHCPC) constitute a Kazal-like domain. Positions 314–380 (DPPCQTELSN…GSRINGVADC (67 aa)) constitute a Thyroglobulin type-1 domain. Residues S387 and S392 are each glycosylated (O-linked (Xyl...) (glycosaminoglycan) serine). Residues 393-436 (GDFHEWTDDEDDEDDIMNDEDEIEDDDEDEGDDDDGGDDHDGYI) are disordered. A compositionally biased stretch (acidic residues) spans 399-430 (TDDEDDEDDIMNDEDEIEDDDEDEGDDDDGGD).

Post-translationally, contains chondroitin sulfate and heparan sulfate O-linked oligosaccharides. As to expression, expressed in brain.

The protein resides in the secreted. It localises to the extracellular space. The protein localises to the extracellular matrix. Functionally, may participate in diverse steps of neurogenesis. Inhibits the processing of pro-matrix metalloproteinase 2 (MMP-2) by MT1-MMP and MT3-MMP. May interfere with tumor invasion. The protein is Testican-3 (SPOCK3) of Pongo abelii (Sumatran orangutan).